Here is a 131-residue protein sequence, read N- to C-terminus: Phosphoribosyl-AMP cyclohydrolase (131 aa).

D82 serves as a coordination point for Mg(2+). A Zn(2+)-binding site is contributed by C83. Mg(2+)-binding residues include D84 and D86. Positions 99 and 106 each coordinate Zn(2+).

This sequence belongs to the PRA-CH family. As to quaternary structure, homodimer. The cofactor is Mg(2+). Requires Zn(2+) as cofactor.

The protein localises to the cytoplasm. The enzyme catalyses 1-(5-phospho-beta-D-ribosyl)-5'-AMP + H2O = 1-(5-phospho-beta-D-ribosyl)-5-[(5-phospho-beta-D-ribosylamino)methylideneamino]imidazole-4-carboxamide. The protein operates within amino-acid biosynthesis; L-histidine biosynthesis; L-histidine from 5-phospho-alpha-D-ribose 1-diphosphate: step 3/9. Its function is as follows. Catalyzes the hydrolysis of the adenine ring of phosphoribosyl-AMP. This is Phosphoribosyl-AMP cyclohydrolase from Methanospirillum hungatei JF-1 (strain ATCC 27890 / DSM 864 / NBRC 100397 / JF-1).